Consider the following 847-residue polypeptide: KN motif and ankyrin repeat domain-containing protein 2 (847 aa).

Residues 1–32 (MAQVLHVPAPFPGTPGQASSAAFPNKEPDPPY) are disordered. The segment at 1–72 (MAQVLHVPAP…PVQRRPRLGS (72 aa)) is interaction with AIFM1. 5 positions are modified to phosphoserine: serine 19, serine 83, serine 86, serine 89, and serine 92. Arginine 105 is modified (omega-N-methylarginine). The segment at 161 to 182 (LAGVGLLPPTPRSSGLSTPVAP) is disordered. Threonine 170 carries the phosphothreonine modification. 2 coiled-coil regions span residues 187–207 (LAHVREQMAGALRKLRQLEEQ) and 284–311 (EAALVAKVAVLETQLKKALQELRAAQTQ). Threonine 331 is subject to Phosphothreonine. Serine 358 is modified (phosphoserine). Disordered regions lie at residues 414–473 (GAAR…GGAS) and 502–581 (NGGY…PEEE). Residues 420–433 (DPPPSPAEPSPSSP) are compositionally biased toward pro residues. Composition is skewed to low complexity over residues 434 to 446 (YPAAEPENPAPAA) and 506 to 516 (ESSSEDSSTAE). Serine 536 is modified (phosphoserine). Residues 610-647 (RELKVAYTTVLQEWLRLACRSDAHPELVRRHLVTFRAM) form an ANK 0; degenerate repeat. 5 ANK repeats span residues 662–692 (NGNTALHYSVSHANFPVVRQLLDSGVCQVDK), 696–729 (AGYSPIMLTALATLKTQDDIDTILQLFRLGNVNA), 734–763 (AGQTALMLAVSHGRVDVVKALLACEVDVNM), 767–797 (DGSTALMCACEHGHKEITGLLLAVPSCDISL), and 801–831 (DGSTALMVALDAGQSEIASMLYSRMNIKCSF). Residues 665 to 831 (TALHYSVSHA…YSRMNIKCSF (167 aa)) form an interaction with NCOA1 region.

In terms of assembly, interacts (non-phosphorylated form) with NCOA1; NCOA2 AND NCOA3. Interacts with AIFM1. Interacts with ARHGDIA; the interaction is direct and may regulate the interaction of ARHGDIA with RHOA, RAC1 and CDC42. Interacts (via ANK repeats 1-5) with KIF21A. Phosphorylated by casein kinase II upon estrogen stimulation. Phosphorylation induces the release by KANK2 of NCOA1 and its translocation to the nucleus where NCOA1 can activate gene transcription. As to expression, expressed by podocytes in kidney glomeruli (at protein level).

It is found in the cytoplasm. It localises to the mitochondrion. Involved in transcription regulation by sequestering in the cytoplasm nuclear receptor coactivators such as NCOA1, NCOA2 and NCOA3. Involved in regulation of caspase-independent apoptosis by sequestering the proapoptotic factor AIFM1 in mitochondria. Pro-apoptotic stimuli can induce its proteasomal degradation allowing the translocation of AIFM1 to the nucleus to induce apoptosis. Involved in the negative control of vitamin D receptor signaling pathway. Involved in actin stress fibers formation through its interaction with ARHGDIA and the regulation of the Rho signaling pathway. May thereby play a role in cell adhesion and migration, regulating for instance podocytes migration during development of the kidney. Through the Rho signaling pathway may also regulate cell proliferation. This is KN motif and ankyrin repeat domain-containing protein 2 from Rattus norvegicus (Rat).